The following is a 415-amino-acid chain: Multidrug resistance protein MdtA (415 aa).

Residues 1-21 (MKGSYKSRWVIVIVVVIAAIA) form the signal peptide. Polar residues predominate over residues 31–46 (DSQSAAPGATKQAQQS). Disordered regions lie at residues 31-56 (DSQSAAPGATKQAQQSPAGGRRGMRA) and 392-415 (EAQSATTPEEKATSREYAKKGARS). Residues 399 to 415 (PEEKATSREYAKKGARS) show a composition bias toward basic and acidic residues.

It belongs to the membrane fusion protein (MFP) (TC 8.A.1) family. Part of a tripartite efflux system composed of MdtA, MdtB and MdtC.

The protein resides in the cell inner membrane. The MdtABC tripartite complex confers resistance against novobiocin and deoxycholate. In Escherichia coli O6:K15:H31 (strain 536 / UPEC), this protein is Multidrug resistance protein MdtA.